The following is a 425-amino-acid chain: Sodium-dependent glucose transporter 1A (425 aa).

11 helical membrane passes run 35 to 55 (LIFVGRATGFLSGTMIGGVLF), 61 to 81 (FFLLGASMVATAAGLYLIPFC), 84 to 104 (AVLLIITMSVFGASVGVVDTG), 123 to 143 (ALHFSFALGAFLAPLLAKLAW), 183 to 203 (WAYASIGTFILVVSVFLFGLF), 228 to 248 (ALLCLLFLFFFFYVGAEITYG), 271 to 291 (SIFWGTFAACRGLAIFFATFL), 294 to 314 (GTMIVLSNIGSLVSCFFLVLF), 320 to 340 (CLWIATSVYGASMAATFPSGI), 355 to 375 (AFFVIGSALGDMAIPAVIGIL), and 382 to 402 (LPVVLYTCLGSAIFTAILFPV).

This sequence belongs to the major facilitator superfamily.

The protein localises to the apical cell membrane. Functionally, may function as a sodium-dependent glucose transporter. Potential channels for urea in the inner medulla of kidney. The sequence is that of Sodium-dependent glucose transporter 1A from Mus musculus (Mouse).